The chain runs to 226 residues: PKHD-type hydroxylase Abu_0724 (226 aa).

One can recognise a Fe2OG dioxygenase domain in the interval 78 to 178 (HIISPFFNKY…RMVSFMWIQS (101 aa)). Positions 96, 98, and 159 each coordinate Fe cation. Residue Arg169 participates in 2-oxoglutarate binding.

It depends on Fe(2+) as a cofactor. L-ascorbate is required as a cofactor.

The protein is PKHD-type hydroxylase Abu_0724 of Aliarcobacter butzleri (strain RM4018) (Arcobacter butzleri).